The primary structure comprises 480 residues: Glutamyl-tRNA(Gln) amidotransferase subunit A (480 aa).

Active-site charge relay system residues include K70 and S145. The Acyl-ester intermediate role is filled by S169.

The protein belongs to the amidase family. GatA subfamily. Heterotrimer of A, B and C subunits.

It carries out the reaction L-glutamyl-tRNA(Gln) + L-glutamine + ATP + H2O = L-glutaminyl-tRNA(Gln) + L-glutamate + ADP + phosphate + H(+). Functionally, allows the formation of correctly charged Gln-tRNA(Gln) through the transamidation of misacylated Glu-tRNA(Gln) in organisms which lack glutaminyl-tRNA synthetase. The reaction takes place in the presence of glutamine and ATP through an activated gamma-phospho-Glu-tRNA(Gln). This Lactobacillus delbrueckii subsp. bulgaricus (strain ATCC 11842 / DSM 20081 / BCRC 10696 / JCM 1002 / NBRC 13953 / NCIMB 11778 / NCTC 12712 / WDCM 00102 / Lb 14) protein is Glutamyl-tRNA(Gln) amidotransferase subunit A.